Here is a 597-residue protein sequence, read N- to C-terminus: Elongation factor 4 (597 aa).

The tr-type G domain occupies 2–184; sequence KNIRNFSIIA…RLVRDIPAPE (183 aa). Residues 14–19 and 131–134 each bind GTP; these read DHGKST and NKID.

Belongs to the TRAFAC class translation factor GTPase superfamily. Classic translation factor GTPase family. LepA subfamily.

The protein resides in the cell inner membrane. It catalyses the reaction GTP + H2O = GDP + phosphate + H(+). Functionally, required for accurate and efficient protein synthesis under certain stress conditions. May act as a fidelity factor of the translation reaction, by catalyzing a one-codon backward translocation of tRNAs on improperly translocated ribosomes. Back-translocation proceeds from a post-translocation (POST) complex to a pre-translocation (PRE) complex, thus giving elongation factor G a second chance to translocate the tRNAs correctly. Binds to ribosomes in a GTP-dependent manner. This is Elongation factor 4 from Edwardsiella ictaluri (strain 93-146).